Here is a 233-residue protein sequence, read N- to C-terminus: Protein fmp52, mitochondrial (233 aa).

Residues 1–36 (MANVALIGCTGMVGAHILTSLIANPAVTRIDTISRR) constitute a mitochondrion transit peptide.

This sequence belongs to the FMP52 family.

The protein localises to the mitochondrion outer membrane. The polypeptide is Protein fmp52, mitochondrial (fmp52) (Emericella nidulans (strain FGSC A4 / ATCC 38163 / CBS 112.46 / NRRL 194 / M139) (Aspergillus nidulans)).